Consider the following 342-residue polypeptide: 3-isopropylmalate dehydrogenase (342 aa).

Substrate contacts are provided by arginine 92, arginine 102, arginine 126, and aspartate 216. Positions 216, 240, and 244 each coordinate Mg(2+). 276 to 288 (GSAPDIAGKGIAD) lines the NAD(+) pocket.

It belongs to the isocitrate and isopropylmalate dehydrogenases family. LeuB type 2 subfamily. In terms of assembly, homodimer. The cofactor is Mg(2+). Requires Mn(2+) as cofactor.

Its subcellular location is the cytoplasm. It carries out the reaction (2R,3S)-3-isopropylmalate + NAD(+) = 4-methyl-2-oxopentanoate + CO2 + NADH. It participates in amino-acid biosynthesis; L-leucine biosynthesis; L-leucine from 3-methyl-2-oxobutanoate: step 3/4. Catalyzes the oxidation of 3-carboxy-2-hydroxy-4-methylpentanoate (3-isopropylmalate) to 3-carboxy-4-methyl-2-oxopentanoate. The product decarboxylates to 4-methyl-2 oxopentanoate. The protein is 3-isopropylmalate dehydrogenase of Corynebacterium kroppenstedtii (strain DSM 44385 / JCM 11950 / CIP 105744 / CCUG 35717).